The following is a 76-amino-acid chain: Sec-independent protein translocase protein TatA (76 aa).

The chain crosses the membrane as a helical span at residues 1 to 21 (MGGLSIWHWLIVLLIVALVFG). A disordered region spans residues 43 to 76 (MKEGEAPADAQQLPRSGSVDVNAKETTRSDSNKA). The span at 64-76 (NAKETTRSDSNKA) shows a compositional bias: basic and acidic residues.

This sequence belongs to the TatA/E family. The Tat system comprises two distinct complexes: a TatABC complex, containing multiple copies of TatA, TatB and TatC subunits, and a separate TatA complex, containing only TatA subunits. Substrates initially bind to the TatABC complex, which probably triggers association of the separate TatA complex to form the active translocon.

It is found in the cell inner membrane. Its function is as follows. Part of the twin-arginine translocation (Tat) system that transports large folded proteins containing a characteristic twin-arginine motif in their signal peptide across membranes. TatA could form the protein-conducting channel of the Tat system. This Burkholderia lata (strain ATCC 17760 / DSM 23089 / LMG 22485 / NCIMB 9086 / R18194 / 383) protein is Sec-independent protein translocase protein TatA.